The following is a 444-amino-acid chain: Coagulation factor VII (444 aa).

The N-terminal stretch at 1–21 (MAPQARGLGLCSLLALQASLA) is a signal peptide. The propeptide occupies 22-39 (AVFITQEEAHSVLRRQRR). The Gla domain occupies 40 to 84 (ANSFLEELRPGSLERECKEELCSFEEAREVFQSTERTKQFWITYN). 4-carboxyglutamate occurs at positions 45, 46, 53, 55, 58, 59, 64, 65, 68, and 74. C56 and C61 are joined by a disulfide. In terms of domain architecture, EGF-like 1; calcium-binding spans 85-121 (DGDQCASNPCQNGGSCEDQIQSYICFCLADFEGRNCE). Intrachain disulfides connect C89/C100, C94/C109, C111/C120, C130/C141, C137/C151, C153/C166, C174/C301, C198/C203, and C217/C233. S91 carries an O-linked (Glc...) serine; alternate glycan. The O-linked (Xyl...) serine; alternate glycan is linked to S91. The O-linked (Fuc) serine glycan is linked to S99. D102 bears the (3R)-3-hydroxyaspartate mark. Residues 126–167 (DQLICMYENGGCEQYCSDHVGSQRSCRCHEGYTLLPNGVSCT) enclose the EGF-like 2 domain. The Peptidase S1 domain occupies 192–431 (IVGGKVCPKG…YTEWLSRLMR (240 aa)). N211 carries N-linked (GlcNAc...) asparagine glycosylation. The Charge relay system role is filled by H232. The N-linked (GlcNAc...) asparagine glycan is linked to N242. D281 (charge relay system) is an active-site residue. An N-linked (GlcNAc...) asparagine glycan is attached at N306. C349 and C368 form a disulfide bridge. D377 is a binding site for substrate. The cysteines at positions 379 and 407 are disulfide-linked. The Charge relay system role is filled by S383.

It belongs to the peptidase S1 family. As to quaternary structure, heterodimer of a light chain and a heavy chain linked by a disulfide bond. In terms of processing, the vitamin K-dependent, enzymatic carboxylation of some glutamate residues allows the modified protein to bind calcium. The iron and 2-oxoglutarate dependent 3-hydroxylation of aspartate and asparagine is (R) stereospecific within EGF domains. Post-translationally, O-glycosylated. O-fucosylated by POFUT1 on a conserved serine or threonine residue found in the consensus sequence C2-X(4,5)-[S/T]-C3 of EGF domains, where C2 and C3 are the second and third conserved cysteines. In terms of processing, can be either O-glucosylated or O-xylosylated at Ser-91 by POGLUT1. As to expression, plasma.

It is found in the secreted. It catalyses the reaction Selective cleavage of Arg-|-Ile bond in factor X to form factor Xa.. Functionally, initiates the extrinsic pathway of blood coagulation. Serine protease that circulates in the blood in a zymogen form. Factor VII is converted to factor VIIa by factor Xa, factor XIIa, factor IXa, or thrombin by minor proteolysis. In the presence of tissue factor and calcium ions, factor VIIa then converts factor X to factor Xa by limited proteolysis. Factor VIIa also converts factor IX to factor IXa in the presence of tissue factor and calcium. The protein is Coagulation factor VII (F7) of Oryctolagus cuniculus (Rabbit).